Reading from the N-terminus, the 362-residue chain is Shewanella-like protein phosphatase 1 (362 aa).

Residues 1-23 form the signal peptide; sequence MIFKKALYILLFLYIAIVKKGES. Residues Asp65, His67, Asp101, and Asn136 each coordinate Mn(2+). The active-site Proton donor is His137. His196 provides a ligand contact to Mn(2+).

This sequence belongs to the metallophosphoesterase superfamily. SLP family. Mn(2+) is required as a cofactor.

Functionally, phosphatase which plays an essential role in the development and differentiation of the ookinete and in the formation of ookinete micronemes. In Plasmodium berghei (strain Anka), this protein is Shewanella-like protein phosphatase 1.